The sequence spans 277 residues: MTLALNPIAFSIGDIHVRWYGIIIACGILLATFMSIREGQRRQIMSDDFIDLLLWGVPIGFIGARIYYVIFEWGYFSQHPDEIIAIWNGGIAIYGGLIAGAIVLLVFCYRRFLPPFLVLDIVAPGVMAAQVLGRWGNFMNQEAHGAKCSLQYLQNLHLPQFIIDQMYINGSYYKPTFLYESFFNLIGLIIILSLRHKKHLFKQGEVFMLYLAWYSVVRFFVEGMRTDSLYIFGVIRVSQALSLLLLIAVVILFVYRRVKVKPKWYLEGSGLKYPYER.

Helical transmembrane passes span 15 to 35, 50 to 70, 89 to 109, and 112 to 132; these read IHVR…TFMS, IDLL…YYVI, GGIA…VFCY, and FLPP…AQVL. Arginine 134 lines the a 1,2-diacyl-sn-glycero-3-phospho-(1'-sn-glycerol) pocket. Transmembrane regions (helical) follow at residues 174-194, 204-224, and 234-254; these read KPTF…ILSL, GEVF…VEGM, and VIRV…ILFV.

Belongs to the Lgt family.

Its subcellular location is the cell membrane. The enzyme catalyses L-cysteinyl-[prolipoprotein] + a 1,2-diacyl-sn-glycero-3-phospho-(1'-sn-glycerol) = an S-1,2-diacyl-sn-glyceryl-L-cysteinyl-[prolipoprotein] + sn-glycerol 1-phosphate + H(+). It participates in protein modification; lipoprotein biosynthesis (diacylglyceryl transfer). Its function is as follows. Catalyzes the transfer of the diacylglyceryl group from phosphatidylglycerol to the sulfhydryl group of the N-terminal cysteine of a prolipoprotein, the first step in the formation of mature lipoproteins. The protein is Phosphatidylglycerol--prolipoprotein diacylglyceryl transferase of Lactobacillus delbrueckii subsp. bulgaricus (strain ATCC 11842 / DSM 20081 / BCRC 10696 / JCM 1002 / NBRC 13953 / NCIMB 11778 / NCTC 12712 / WDCM 00102 / Lb 14).